The chain runs to 180 residues: Transcriptional repressor NrdR (180 aa).

A zinc finger lies at 3-34 (CPRCSKQEIRVLESRSAEGGQSVRRRRECMSC). The region spanning 49–139 (IMVIKRDGSR…VYRQFQGIKD (91 aa)) is the ATP-cone domain. Positions 155–180 (LERLLQDSSASDSESSGSPDLVGEYS) are disordered. Over residues 160-174 (QDSSASDSESSGSPD) the composition is skewed to low complexity.

Belongs to the NrdR family. The cofactor is Zn(2+).

Negatively regulates transcription of bacterial ribonucleotide reductase nrd genes and operons by binding to NrdR-boxes. The protein is Transcriptional repressor NrdR of Synechococcus sp. (strain JA-2-3B'a(2-13)) (Cyanobacteria bacterium Yellowstone B-Prime).